Here is a 471-residue protein sequence, read N- to C-terminus: MSDITAVLLAAGHGTRMKSDLIKVMHPLAGKPMIGHIVDNVRRAGLEDIVVVVGYQQERIREYLGDRVRYAVQSEQLGTGHAVLQAAGLIDETEGGHVLVMYGDNPFIGPELIERLIRAHVEADAAASLLTAELADPGALGRILRDPATGAFLGSVEYKDATPEQRRIREIWTGVAVFRRAGFTALLNRLDRNNAQGEYYLPQVWEILLQRGEKVQALLLASEEDALAPNDRVELARAEARLRRQINERHMRNGVTIINPDATYIDEDVEIGRDTVIWPFTFIHGKTVIGPHCKIGPMTTIVSSTVAEGCVVEQSVVEESYVGPGCRIGPMAHLRPGCELEGAAEIGNYAELKKAKVGRGVKCHHHSYLGDATIGAGANIGAGTITANYNGVEKFRTEIGSGAFIGTNVNLIAPITVGDGALIAAGSTVGPRLEIPADALVVERAQAVIKEGRAASLKEAWRQRKMNREGT.

Residues 1-232 (MSDITAVLLA…EEDALAPNDR (232 aa)) are pyrophosphorylase. UDP-N-acetyl-alpha-D-glucosamine is bound by residues 9–12 (LAAG), Lys23, Gln73, 78–79 (GT), 102–104 (YGD), Gly141, Glu157, and Asn230. A Mg(2+)-binding site is contributed by Asp104. Asn230 contributes to the Mg(2+) binding site. Residues 233-253 (VELARAEARLRRQINERHMRN) are linker. The N-acetyltransferase stretch occupies residues 254–471 (GVTIINPDAT…RQRKMNREGT (218 aa)). UDP-N-acetyl-alpha-D-glucosamine-binding residues include Arg335 and Lys353. His365 functions as the Proton acceptor in the catalytic mechanism. Tyr368 and Asn379 together coordinate UDP-N-acetyl-alpha-D-glucosamine. Acetyl-CoA contacts are provided by residues Ala382, 388 to 389 (NY), Ala425, and Arg444.

This sequence in the N-terminal section; belongs to the N-acetylglucosamine-1-phosphate uridyltransferase family. In the C-terminal section; belongs to the transferase hexapeptide repeat family. Homotrimer. The cofactor is Mg(2+).

The protein resides in the cytoplasm. The enzyme catalyses alpha-D-glucosamine 1-phosphate + acetyl-CoA = N-acetyl-alpha-D-glucosamine 1-phosphate + CoA + H(+). The catalysed reaction is N-acetyl-alpha-D-glucosamine 1-phosphate + UTP + H(+) = UDP-N-acetyl-alpha-D-glucosamine + diphosphate. It functions in the pathway nucleotide-sugar biosynthesis; UDP-N-acetyl-alpha-D-glucosamine biosynthesis; N-acetyl-alpha-D-glucosamine 1-phosphate from alpha-D-glucosamine 6-phosphate (route II): step 2/2. The protein operates within nucleotide-sugar biosynthesis; UDP-N-acetyl-alpha-D-glucosamine biosynthesis; UDP-N-acetyl-alpha-D-glucosamine from N-acetyl-alpha-D-glucosamine 1-phosphate: step 1/1. Its pathway is bacterial outer membrane biogenesis; LPS lipid A biosynthesis. Catalyzes the last two sequential reactions in the de novo biosynthetic pathway for UDP-N-acetylglucosamine (UDP-GlcNAc). The C-terminal domain catalyzes the transfer of acetyl group from acetyl coenzyme A to glucosamine-1-phosphate (GlcN-1-P) to produce N-acetylglucosamine-1-phosphate (GlcNAc-1-P), which is converted into UDP-GlcNAc by the transfer of uridine 5-monophosphate (from uridine 5-triphosphate), a reaction catalyzed by the N-terminal domain. The polypeptide is Bifunctional protein GlmU (Symbiobacterium thermophilum (strain DSM 24528 / JCM 14929 / IAM 14863 / T)).